We begin with the raw amino-acid sequence, 359 residues long: Cytochrome c oxidase subunit 2 (359 aa).

The signal sequence occupies residues 1–28 (MEQQNKRGLKRKALLGGVLGLGGLAMAG). C29 carries S-diacylglycerol cysteine lipidation. 2 helical membrane-spanning segments follow: residues 64 to 84 (VWVA…TAIF) and 107 to 127 (VPLE…LFFF). The tract at residues 168–203 (PGGQDYQGSDPERQAAAEASKKDPSGDNPIHGNSKS) is disordered. Positions 177–192 (DPERQAAAEASKKDPS) are enriched in basic and acidic residues. Residues H244, C285, E287, C289, H293, and M296 each contribute to the Cu cation site. Residues 335-359 (YATSTSPFVSDRTATRDGENTQSNA) form a disordered region.

In terms of assembly, associates with subunits I, III and IV to form cytochrome c oxidase. The 4 subunit cytochrome c oxidase forms a supercomplex with the menaquinol-cytochrome c reductase complex (cytochrome bc1). It depends on binuclear copper center (CuA) as a cofactor.

Its subcellular location is the cell membrane. It catalyses the reaction 4 Fe(II)-[cytochrome c] + O2 + 8 H(+)(in) = 4 Fe(III)-[cytochrome c] + 2 H2O + 4 H(+)(out). Its function is as follows. Subunits I and II form the functional core of the enzyme complex. Electrons originating in cytochrome c are transferred via heme a and Cu(A) to the binuclear center formed by heme a3 and Cu(B). The protein is Cytochrome c oxidase subunit 2 (ctaC) of Corynebacterium glutamicum (strain ATCC 13032 / DSM 20300 / JCM 1318 / BCRC 11384 / CCUG 27702 / LMG 3730 / NBRC 12168 / NCIMB 10025 / NRRL B-2784 / 534).